The chain runs to 254 residues: Probable transcriptional regulatory protein MAE_13580 (254 aa).

The protein belongs to the TACO1 family.

The protein localises to the cytoplasm. The sequence is that of Probable transcriptional regulatory protein MAE_13580 from Microcystis aeruginosa (strain NIES-843 / IAM M-2473).